The following is a 155-amino-acid chain: Cyanate hydratase (155 aa).

Catalysis depends on residues R95, E98, and S121.

It belongs to the cyanase family.

The catalysed reaction is cyanate + hydrogencarbonate + 3 H(+) = NH4(+) + 2 CO2. Functionally, catalyzes the reaction of cyanate with bicarbonate to produce ammonia and carbon dioxide. The chain is Cyanate hydratase from Pseudomonas savastanoi pv. phaseolicola (strain 1448A / Race 6) (Pseudomonas syringae pv. phaseolicola (strain 1448A / Race 6)).